A 449-amino-acid polypeptide reads, in one-letter code: 23S rRNA (uracil(1939)-C(5))-methyltransferase RlmD (449 aa).

The 59-residue stretch at 12-70 folds into the TRAM domain; the sequence is SKQLSAKQSFSVHQLDHLGAGIAQHQGKVVFIPGALPSETVQAQLTEQKKNYARAKLIK. 4 residues coordinate [4Fe-4S] cluster: C83, C89, C92, and C170. S-adenosyl-L-methionine-binding residues include Q282, F311, N316, E332, D359, and D379. The active-site Nucleophile is C405.

Belongs to the class I-like SAM-binding methyltransferase superfamily. RNA M5U methyltransferase family. RlmD subfamily.

It catalyses the reaction uridine(1939) in 23S rRNA + S-adenosyl-L-methionine = 5-methyluridine(1939) in 23S rRNA + S-adenosyl-L-homocysteine + H(+). In terms of biological role, catalyzes the formation of 5-methyl-uridine at position 1939 (m5U1939) in 23S rRNA. This Shewanella sp. (strain MR-4) protein is 23S rRNA (uracil(1939)-C(5))-methyltransferase RlmD.